A 359-amino-acid chain; its full sequence is Anhydro-N-acetylmuramic acid kinase (359 aa).

An ATP-binding site is contributed by 12-19 (GTSLDGVD).

Belongs to the anhydro-N-acetylmuramic acid kinase family.

The enzyme catalyses 1,6-anhydro-N-acetyl-beta-muramate + ATP + H2O = N-acetyl-D-muramate 6-phosphate + ADP + H(+). The protein operates within amino-sugar metabolism; 1,6-anhydro-N-acetylmuramate degradation. It participates in cell wall biogenesis; peptidoglycan recycling. Catalyzes the specific phosphorylation of 1,6-anhydro-N-acetylmuramic acid (anhMurNAc) with the simultaneous cleavage of the 1,6-anhydro ring, generating MurNAc-6-P. Is required for the utilization of anhMurNAc either imported from the medium or derived from its own cell wall murein, and thus plays a role in cell wall recycling. This chain is Anhydro-N-acetylmuramic acid kinase, found in Sulfurovum sp. (strain NBC37-1).